Reading from the N-terminus, the 167-residue chain is Phosphopantetheine adenylyltransferase (167 aa).

S9 is a binding site for substrate. ATP-binding positions include 9–10 (SF) and H17. Residues K41, L73, and K87 each contribute to the substrate site. ATP-binding positions include 88–90 (GLR), E98, and 123–129 (YSYLSSS).

It belongs to the bacterial CoaD family. As to quaternary structure, homohexamer. Mg(2+) is required as a cofactor.

The protein localises to the cytoplasm. It carries out the reaction (R)-4'-phosphopantetheine + ATP + H(+) = 3'-dephospho-CoA + diphosphate. It functions in the pathway cofactor biosynthesis; coenzyme A biosynthesis; CoA from (R)-pantothenate: step 4/5. Reversibly transfers an adenylyl group from ATP to 4'-phosphopantetheine, yielding dephospho-CoA (dPCoA) and pyrophosphate. The polypeptide is Phosphopantetheine adenylyltransferase (Caldicellulosiruptor bescii (strain ATCC BAA-1888 / DSM 6725 / KCTC 15123 / Z-1320) (Anaerocellum thermophilum)).